The primary structure comprises 443 residues: MQPSRNFDDLKFSSIHRRILLWGSGGPFLDGYVLVMIGVALEQLTPALKLDADWIGLLGAGTLAGLFVGTSLFGYISDKVGRRKMFLIDIIAIGVISVATMFVSSPVELLVMRVLIGIVIGADYPIATSMITEFSSTRQRAFSISFIAAMWYVGATCADLVGYWLYDVEGGWRWMLGSAAIPCLLILIGRFELPESPRWLLRKGRVKECEEMMIKLFGEPVAFDEEQPQQTRFRDLFNRRHFPFVLFVAAIWTCQVIPMFAIYTFGPQIVGLLGLGVGKNAALGNVVISLFFMLGCIPPMLWLNTAGRRPLLIGSFAMMTLALAVLGLIPDMGIWLVVMAFAVYAFFSGGPGNLQWLYPNELFPTDIRASAVGVIMSLSRIGTIVSTWALPIFINNYGISNTMLMGAGISLFGLLISVAFAPETRGMSLAQTSNMTIRGQRMG.

Residues 1-18 (MQPSRNFDDLKFSSIHRR) are Cytoplasmic-facing. The chain crosses the membrane as a helical span at residues 19 to 39 (ILLWGSGGPFLDGYVLVMIGV). The Periplasmic portion of the chain corresponds to 40-53 (ALEQLTPALKLDAD). The helical transmembrane segment at 54-74 (WIGLLGAGTLAGLFVGTSLFG) threads the bilayer. At 75–84 (YISDKVGRRK) the chain is on the cytoplasmic side. Residues 85-105 (MFLIDIIAIGVISVATMFVSS) traverse the membrane as a helical segment. Residues 106–113 (PVELLVMR) are Periplasmic-facing. A helical membrane pass occupies residues 114–134 (VLIGIVIGADYPIATSMITEF). The Cytoplasmic segment spans residues 135-145 (SSTRQRAFSIS). A helical transmembrane segment spans residues 146 to 166 (FIAAMWYVGATCADLVGYWLY). The Periplasmic segment spans residues 167–173 (DVEGGWR). Residues 174-194 (WMLGSAAIPCLLILIGRFELP) form a helical membrane-spanning segment. Residues 195–241 (ESPRWLLRKGRVKECEEMMIKLFGEPVAFDEEQPQQTRFRDLFNRRH) lie on the Cytoplasmic side of the membrane. Residues 242–262 (FPFVLFVAAIWTCQVIPMFAI) form a helical membrane-spanning segment. Residues 263–282 (YTFGPQIVGLLGLGVGKNAA) lie on the Periplasmic side of the membrane. A helical membrane pass occupies residues 283-303 (LGNVVISLFFMLGCIPPMLWL). The Cytoplasmic portion of the chain corresponds to 304–309 (NTAGRR). Residues 310–329 (PLLIGSFAMMTLALAVLGLI) traverse the membrane as a helical segment. Residues 330 to 334 (PDMGI) lie on the Periplasmic side of the membrane. Residues 335 to 357 (WLVVMAFAVYAFFSGGPGNLQWL) traverse the membrane as a helical segment. At 358-373 (YPNELFPTDIRASAVG) the chain is on the cytoplasmic side. The chain crosses the membrane as a helical span at residues 374-394 (VIMSLSRIGTIVSTWALPIFI). Over 395-401 (NNYGISN) the chain is Periplasmic. A helical transmembrane segment spans residues 402–422 (TMLMGAGISLFGLLISVAFAP). Residues 423–443 (ETRGMSLAQTSNMTIRGQRMG) lie on the Cytoplasmic side of the membrane.

The protein belongs to the major facilitator superfamily. Sugar transporter (TC 2.A.1.1) family.

It is found in the cell inner membrane. This is Putative metabolite transport protein YaaU (yaaU) from Escherichia coli (strain K12).